A 209-amino-acid chain; its full sequence is Ribosomal RNA small subunit methyltransferase G (209 aa).

S-adenosyl-L-methionine is bound by residues Gly-77, Met-82, 128 to 129, and Arg-143; that span reads VE.

This sequence belongs to the methyltransferase superfamily. RNA methyltransferase RsmG family.

The protein resides in the cytoplasm. It carries out the reaction guanosine(527) in 16S rRNA + S-adenosyl-L-methionine = N(7)-methylguanosine(527) in 16S rRNA + S-adenosyl-L-homocysteine. Functionally, specifically methylates the N7 position of guanine in position 527 of 16S rRNA. This is Ribosomal RNA small subunit methyltransferase G from Chromobacterium violaceum (strain ATCC 12472 / DSM 30191 / JCM 1249 / CCUG 213 / NBRC 12614 / NCIMB 9131 / NCTC 9757 / MK).